Consider the following 387-residue polypeptide: Solute carrier family 25 protein Shawn (387 aa).

3 Solcar repeats span residues 37–156 (IRPL…FKAR), 179–263 (IPFL…LKSS), and 269–366 (PTFS…GKSF). 6 helical membrane passes run 43–63 (VASA…LDVI), 128–148 (LWSG…IYFV), 179–199 (IPFL…VTCV), 235–255 (LWRG…IYWT), 275–295 (FAAG…FDVV), and 337–357 (AIFS…AIMI).

This sequence belongs to the mitochondrial carrier (TC 2.A.29) family.

Its subcellular location is the mitochondrion inner membrane. Its function is as follows. Mitochondrial transporter required for glutathione import into mitochondria. The chain is Solute carrier family 25 protein Shawn from Drosophila melanogaster (Fruit fly).